Here is an 80-residue protein sequence, read N- to C-terminus: RNA-binding protein Hfq (80 aa).

The Sm domain maps to 10–69 (DPFLNVLRKEHIPVSIYLVNGIKLQGHIDSFDQYVVLLRNSVTQMVYKHAISTIVPGKAV).

It belongs to the Hfq family. Homohexamer.

Functionally, RNA chaperone that binds small regulatory RNA (sRNAs) and mRNAs to facilitate mRNA translational regulation in response to envelope stress, environmental stress and changes in metabolite concentrations. Also binds with high specificity to tRNAs. The sequence is that of RNA-binding protein Hfq from Nitrosomonas eutropha (strain DSM 101675 / C91 / Nm57).